The sequence spans 32 residues: Toxic phospholipase A2 (32 aa).

Belongs to the phospholipase A2 family. Group III subfamily. Ca(2+) is required as a cofactor.

It is found in the secreted. It localises to the nematocyst. It carries out the reaction a 1,2-diacyl-sn-glycero-3-phosphocholine + H2O = a 1-acyl-sn-glycero-3-phosphocholine + a fatty acid + H(+). In terms of biological role, PLA2 catalyzes the calcium-dependent hydrolysis of the 2-acyl groups in 3-sn-phosphoglycerides. This is Toxic phospholipase A2 from Rhopilema nomadica (Mediteranean medusa).